A 195-amino-acid chain; its full sequence is Nucleoid occlusion factor SlmA (195 aa).

One can recognise an HTH tetR-type domain in the interval 6–66 (PSRRESILQA…ALIEFAEEAV (61 aa)). A DNA-binding region (H-T-H motif) is located at residues 29 to 48 (TTAGLAKTVGVTEAALYRHF). Residues 118 to 138 (RKRASQFFERLETQIRQALKE) adopt a coiled-coil conformation.

This sequence belongs to the nucleoid occlusion factor SlmA family. As to quaternary structure, homodimer. Interacts with FtsZ.

The protein resides in the cytoplasm. It is found in the nucleoid. In terms of biological role, required for nucleoid occlusion (NO) phenomenon, which prevents Z-ring formation and cell division over the nucleoid. Acts as a DNA-associated cell division inhibitor that binds simultaneously chromosomal DNA and FtsZ, and disrupts the assembly of FtsZ polymers. SlmA-DNA-binding sequences (SBS) are dispersed on non-Ter regions of the chromosome, preventing FtsZ polymerization at these regions. This chain is Nucleoid occlusion factor SlmA, found in Marinobacter nauticus (strain ATCC 700491 / DSM 11845 / VT8) (Marinobacter aquaeolei).